The chain runs to 334 residues: Ketol-acid reductoisomerase (NADP(+)) (334 aa).

Positions 1–181 (MTTVYYDQSV…GATRAGVLET (181 aa)) constitute a KARI N-terminal Rossmann domain. Residues 25–28 (YGSQ), arginine 48, serine 52, and 82–85 (DEIQ) contribute to the NADP(+) site. Residue histidine 107 is part of the active site. An NADP(+)-binding site is contributed by glycine 133. The 146-residue stretch at 182–327 (SFKEETETDL…RELRDMMPFI (146 aa)) folds into the KARI C-terminal knotted domain. Residues aspartate 190, glutamate 194, glutamate 226, and glutamate 230 each coordinate Mg(2+). Serine 251 serves as a coordination point for substrate.

It belongs to the ketol-acid reductoisomerase family. It depends on Mg(2+) as a cofactor.

The catalysed reaction is (2R)-2,3-dihydroxy-3-methylbutanoate + NADP(+) = (2S)-2-acetolactate + NADPH + H(+). It carries out the reaction (2R,3R)-2,3-dihydroxy-3-methylpentanoate + NADP(+) = (S)-2-ethyl-2-hydroxy-3-oxobutanoate + NADPH + H(+). The protein operates within amino-acid biosynthesis; L-isoleucine biosynthesis; L-isoleucine from 2-oxobutanoate: step 2/4. Its pathway is amino-acid biosynthesis; L-valine biosynthesis; L-valine from pyruvate: step 2/4. Involved in the biosynthesis of branched-chain amino acids (BCAA). Catalyzes an alkyl-migration followed by a ketol-acid reduction of (S)-2-acetolactate (S2AL) to yield (R)-2,3-dihydroxy-isovalerate. In the isomerase reaction, S2AL is rearranged via a Mg-dependent methyl migration to produce 3-hydroxy-3-methyl-2-ketobutyrate (HMKB). In the reductase reaction, this 2-ketoacid undergoes a metal-dependent reduction by NADPH to yield (R)-2,3-dihydroxy-isovalerate. This chain is Ketol-acid reductoisomerase (NADP(+)), found in Staphylococcus saprophyticus subsp. saprophyticus (strain ATCC 15305 / DSM 20229 / NCIMB 8711 / NCTC 7292 / S-41).